We begin with the raw amino-acid sequence, 84 residues long: Putative membrane protein insertion efficiency factor (84 aa).

Residues 61 to 84 (SQGFEDPLPPNTKRTNLTHGRQTK) form a disordered region. The span at 72-84 (TKRTNLTHGRQTK) shows a compositional bias: polar residues.

The protein belongs to the UPF0161 family.

The protein localises to the cell inner membrane. Its function is as follows. Could be involved in insertion of integral membrane proteins into the membrane. This is Putative membrane protein insertion efficiency factor from Leptospira borgpetersenii serovar Hardjo-bovis (strain JB197).